A 314-amino-acid chain; its full sequence is 4-hydroxy-3-methylbut-2-enyl diphosphate reductase (314 aa).

Cys-12 contributes to the [4Fe-4S] cluster binding site. (2E)-4-hydroxy-3-methylbut-2-enyl diphosphate-binding residues include His-41 and His-74. His-41 and His-74 together coordinate dimethylallyl diphosphate. The isopentenyl diphosphate site is built by His-41 and His-74. Residue Cys-96 participates in [4Fe-4S] cluster binding. His-124 is a binding site for (2E)-4-hydroxy-3-methylbut-2-enyl diphosphate. His-124 serves as a coordination point for dimethylallyl diphosphate. His-124 contributes to the isopentenyl diphosphate binding site. Glu-126 (proton donor) is an active-site residue. (2E)-4-hydroxy-3-methylbut-2-enyl diphosphate is bound at residue Thr-167. Cys-197 contacts [4Fe-4S] cluster. Residues Ser-225, Ser-226, Asn-227, and Ser-269 each contribute to the (2E)-4-hydroxy-3-methylbut-2-enyl diphosphate site. Dimethylallyl diphosphate is bound by residues Ser-225, Ser-226, Asn-227, and Ser-269. Isopentenyl diphosphate is bound by residues Ser-225, Ser-226, Asn-227, and Ser-269.

It belongs to the IspH family. Requires [4Fe-4S] cluster as cofactor.

The enzyme catalyses isopentenyl diphosphate + 2 oxidized [2Fe-2S]-[ferredoxin] + H2O = (2E)-4-hydroxy-3-methylbut-2-enyl diphosphate + 2 reduced [2Fe-2S]-[ferredoxin] + 2 H(+). It carries out the reaction dimethylallyl diphosphate + 2 oxidized [2Fe-2S]-[ferredoxin] + H2O = (2E)-4-hydroxy-3-methylbut-2-enyl diphosphate + 2 reduced [2Fe-2S]-[ferredoxin] + 2 H(+). Its pathway is isoprenoid biosynthesis; dimethylallyl diphosphate biosynthesis; dimethylallyl diphosphate from (2E)-4-hydroxy-3-methylbutenyl diphosphate: step 1/1. It participates in isoprenoid biosynthesis; isopentenyl diphosphate biosynthesis via DXP pathway; isopentenyl diphosphate from 1-deoxy-D-xylulose 5-phosphate: step 6/6. Functionally, catalyzes the conversion of 1-hydroxy-2-methyl-2-(E)-butenyl 4-diphosphate (HMBPP) into a mixture of isopentenyl diphosphate (IPP) and dimethylallyl diphosphate (DMAPP). Acts in the terminal step of the DOXP/MEP pathway for isoprenoid precursor biosynthesis. The chain is 4-hydroxy-3-methylbut-2-enyl diphosphate reductase from Idiomarina loihiensis (strain ATCC BAA-735 / DSM 15497 / L2-TR).